A 179-amino-acid polypeptide reads, in one-letter code: Acireductone dioxygenase (179 aa).

Positions 1-23 (MVQAWYMDESTADPRMPHRAQPD) are disordered. Fe(2+) is bound by residues His88, His90, Glu94, and His133. 4 residues coordinate Ni(2+): His88, His90, Glu94, and His133.

The protein belongs to the acireductone dioxygenase (ARD) family. As to quaternary structure, monomer. Interacts with MMP14. The cofactor is Fe(2+). It depends on Ni(2+) as a cofactor. Detected in prostate, liver, heart, brain, muscle, kidney and seminal vesicles.

It localises to the cytoplasm. The protein localises to the nucleus. Its subcellular location is the cell membrane. The enzyme catalyses 1,2-dihydroxy-5-(methylsulfanyl)pent-1-en-3-one + O2 = 4-methylsulfanyl-2-oxobutanoate + formate + 2 H(+). It carries out the reaction 1,2-dihydroxy-5-(methylsulfanyl)pent-1-en-3-one + O2 = 3-(methylsulfanyl)propanoate + CO + formate + 2 H(+). Its pathway is amino-acid biosynthesis; L-methionine biosynthesis via salvage pathway; L-methionine from S-methyl-5-thio-alpha-D-ribose 1-phosphate: step 5/6. Its function is as follows. Catalyzes 2 different reactions between oxygen and the acireductone 1,2-dihydroxy-3-keto-5-methylthiopentene (DHK-MTPene) depending upon the metal bound in the active site. Fe-containing acireductone dioxygenase (Fe-ARD) produces formate and 2-keto-4-methylthiobutyrate (KMTB), the alpha-ketoacid precursor of methionine in the methionine recycle pathway. Ni-containing acireductone dioxygenase (Ni-ARD) produces methylthiopropionate, carbon monoxide and formate, and does not lie on the methionine recycle pathway. Also down-regulates cell migration mediated by MMP14. This chain is Acireductone dioxygenase (Adi1), found in Rattus norvegicus (Rat).